The sequence spans 284 residues: Tryptophan 2,3-dioxygenase (284 aa).

Substrate is bound by residues 53 to 57, Tyr-115, and Arg-119; that span reads FIVQH. A heme-binding site is contributed by His-242. Thr-256 provides a ligand contact to substrate.

Belongs to the tryptophan 2,3-dioxygenase family. In terms of assembly, homotetramer. Heme is required as a cofactor.

The catalysed reaction is L-tryptophan + O2 = N-formyl-L-kynurenine. It functions in the pathway amino-acid degradation; L-tryptophan degradation via kynurenine pathway; L-kynurenine from L-tryptophan: step 1/2. Functionally, heme-dependent dioxygenase that catalyzes the oxidative cleavage of the L-tryptophan (L-Trp) pyrrole ring and converts L-tryptophan to N-formyl-L-kynurenine. Catalyzes the oxidative cleavage of the indole moiety. The protein is Tryptophan 2,3-dioxygenase of Bordetella parapertussis (strain 12822 / ATCC BAA-587 / NCTC 13253).